The sequence spans 478 residues: V-type ATP synthase beta chain (478 aa).

It belongs to the ATPase alpha/beta chains family.

Produces ATP from ADP in the presence of a proton gradient across the membrane. The V-type beta chain is a regulatory subunit. The polypeptide is V-type ATP synthase beta chain (Thermus thermophilus (strain ATCC BAA-163 / DSM 7039 / HB27)).